We begin with the raw amino-acid sequence, 92 residues long: UPF0237 protein MM_0082 (92 aa).

The ACT domain maps to Ile-7 to Gln-81.

This sequence belongs to the UPF0237 family.

This is UPF0237 protein MM_0082 from Methanosarcina mazei (strain ATCC BAA-159 / DSM 3647 / Goe1 / Go1 / JCM 11833 / OCM 88) (Methanosarcina frisia).